The sequence spans 406 residues: MKVTNASLLALLLPAVSGRFVETGEPDRSILYPDGLPQPTETGEKYHIELSPGDTRWVTEDEKWELRRSGKRFFDITDHPDLGALRAMTASRKKSVFPEKPKYQKELKPFLAELSKTEMEDHLTTFTSFHTRYYKSDYGRQSSEWLLKQVRDTIEKAGADKHVRAEHFKHPWGQNSIIATIPGKTNATVVIGAHQDSINLWLPSVLAAPGADDDGSGTVTILEAFRVILQSEDIVKGNHENTLEFHWYSAEEGGLLGSQAIFSSYEKEGRDVKAMLQQDMTGFITRTLDAGKPESVGVIVDFVDPNLTQFIKVVIDEYCSIPYVETKCGYACSDHASASKAGYPSAFVIESAFEYSDNHIHSTEDLIKYLSFDHMLQHARMTLAFGYELAFTDFAALEKPDHSDSL.

The N-terminal stretch at 1–18 is a signal peptide; it reads MKVTNASLLALLLPAVSG. Residues 19 to 94 constitute a propeptide that is removed on maturation; sequence RFVETGEPDR…LRAMTASRKK (76 aa). N186 carries N-linked (GlcNAc...) asparagine glycosylation. Zn(2+) contacts are provided by H194, D213, E252, and D279. N-linked (GlcNAc...) asparagine glycosylation occurs at N306. A disulfide bond links C328 and C332. H361 contacts Zn(2+).

It belongs to the peptidase M28 family. M28E subfamily. Monomer. Zn(2+) is required as a cofactor.

It localises to the secreted. In terms of biological role, extracellular aminopeptidase that allows assimilation of proteinaceous substrates. This is Leucine aminopeptidase 1 (LAP1) from Chaetomium globosum (strain ATCC 6205 / CBS 148.51 / DSM 1962 / NBRC 6347 / NRRL 1970) (Soil fungus).